The primary structure comprises 555 residues: Dynein regulatory complex protein 11 (555 aa).

2 consecutive IQ domains span residues 154 to 183 (EDEA…TKRQ) and 199 to 226 (HEEA…ADKE). 4 disordered regions span residues 232 to 255 (MKPK…MRRK), 299 to 377 (KRNP…EQKI), 450 to 469 (AAKL…EPFS), and 501 to 555 (AKKD…SCGA). Basic and acidic residues-rich tracts occupy residues 235 to 244 (KPRDPKRDPQ) and 338 to 367 (GDGK…KGGG). Over residues 452-464 (KLGKKGKKKKGKK) the composition is skewed to basic residues. Residues 501–521 (AKKDEKDAAGDGKGKGKDGKG) show a composition bias toward basic and acidic residues. The span at 537–546 (KKKKGGKKKS) shows a compositional bias: basic residues.

It belongs to the AAA ATPase family. DRC11 subfamily. In terms of assembly, component of the nexin-dynein regulatory complex (N-DRC). Interacts with DRC5.

The protein localises to the cytoplasm. It localises to the cytoskeleton. It is found in the flagellum axoneme. In terms of biological role, component of the nexin-dynein regulatory complex (N-DRC), a key regulator of ciliary/flagellar motility which maintains the alignment and integrity of the distal axoneme and regulates microtubule sliding in motile axonemes. This chain is Dynein regulatory complex protein 11, found in Chlamydomonas reinhardtii (Chlamydomonas smithii).